The primary structure comprises 508 residues: Photosystem II CP47 reaction center protein (508 aa).

The next 6 helical transmembrane spans lie at 21 to 36 (SVHI…WAGS), 101 to 115 (IVFS…IWHW), 140 to 156 (GIHL…FGAF), 203 to 218 (IAAG…FHLS), 237 to 252 (VLSS…AFVV), and 457 to 472 (SFAL…HGAR).

Belongs to the PsbB/PsbC family. PsbB subfamily. As to quaternary structure, PSII is composed of 1 copy each of membrane proteins PsbA, PsbB, PsbC, PsbD, PsbE, PsbF, PsbH, PsbI, PsbJ, PsbK, PsbL, PsbM, PsbT, PsbX, PsbY, PsbZ, Psb30/Ycf12, at least 3 peripheral proteins of the oxygen-evolving complex and a large number of cofactors. It forms dimeric complexes. Binds multiple chlorophylls. PSII binds additional chlorophylls, carotenoids and specific lipids. is required as a cofactor.

It localises to the plastid. The protein resides in the chloroplast thylakoid membrane. In terms of biological role, one of the components of the core complex of photosystem II (PSII). It binds chlorophyll and helps catalyze the primary light-induced photochemical processes of PSII. PSII is a light-driven water:plastoquinone oxidoreductase, using light energy to abstract electrons from H(2)O, generating O(2) and a proton gradient subsequently used for ATP formation. This chain is Photosystem II CP47 reaction center protein, found in Gossypium hirsutum (Upland cotton).